Reading from the N-terminus, the 475-residue chain is Phenolic acid decarboxylase (475 aa).

Mn(2+)-binding residues include Asn-161, His-183, and Glu-225. Residues Asn-161–Arg-166 and Met-182–His-183 contribute to the prenylated FMN site. The Proton donor role is filled by Glu-274.

It belongs to the UbiD family. YclC subfamily. It depends on prenylated FMN as a cofactor. The cofactor is Mn(2+).

It catalyses the reaction 4-hydroxybenzoate + H(+) = phenol + CO2. The enzyme catalyses vanillate + H(+) = guaiacol + CO2. Involved in the non-oxidative decarboxylation and detoxification of phenolic derivatives under both aerobic and anaerobic conditions. Phenolic acid decarboxylase that catalyzes the reversible decarboxylation of 4-hydroxybenzoate and vanillate. The chain is Phenolic acid decarboxylase from Escherichia coli O157:H7.